Consider the following 74-residue polypeptide: Exodeoxyribonuclease 7 small subunit (74 aa).

Belongs to the XseB family. As to quaternary structure, heterooligomer composed of large and small subunits.

It localises to the cytoplasm. The catalysed reaction is Exonucleolytic cleavage in either 5'- to 3'- or 3'- to 5'-direction to yield nucleoside 5'-phosphates.. Its function is as follows. Bidirectionally degrades single-stranded DNA into large acid-insoluble oligonucleotides, which are then degraded further into small acid-soluble oligonucleotides. The protein is Exodeoxyribonuclease 7 small subunit of Actinobacillus pleuropneumoniae serotype 5b (strain L20).